The following is a 445-amino-acid chain: 2-oxoisovalerate dehydrogenase subunit alpha, mitochondrial (445 aa).

The N-terminal 45 residues, 1 to 45, are a transit peptide targeting the mitochondrion; that stretch reads MAVAIAAARVWRPNRGLSQAALLLLWRPGARGLARSHPHRQQQQF. Residues Tyr-158 and Arg-159 each coordinate thiamine diphosphate. Ser-206 contributes to the K(+) binding site. Ser-207 is a thiamine diphosphate binding site. Pro-208, Thr-211, and Gln-212 together coordinate K(+). A Mg(2+)-binding site is contributed by Glu-238. 3 residues coordinate thiamine diphosphate: Gly-239, Ala-240, and Arg-265. Mg(2+)-binding residues include Asn-267 and Tyr-269. His-336 is a binding site for thiamine diphosphate. Position 337 is a phosphoserine; by BCKDK (Ser-337). Thr-338 is modified (phosphothreonine). Phosphoserine is present on residues Ser-339 and Ser-347. Lys-356 carries the post-translational modification N6-acetyllysine; alternate. The residue at position 356 (Lys-356) is an N6-succinyllysine; alternate. N6-succinyllysine is present on Lys-380.

Belongs to the BCKDHA family. In terms of assembly, heterotetramer of 2 alpha/BCKDHA and 2 beta chains/BCKDHB that forms the branched-chain alpha-keto acid decarboxylase (E1) component of the BCKD complex. The branched-chain alpha-ketoacid dehydrogenase is a large complex composed of three major building blocks E1, E2 and E3. It is organized around E2, a 24-meric cubic core composed of DBT, to which are associated 6 to 12 copies of E1, and approximately 6 copies of the dehydrogenase E3, a DLD dimer. Interacts with PPM1K. Requires thiamine diphosphate as cofactor. It depends on Mg(2+) as a cofactor. Phosphorylated at Ser-337 by BCKDK and dephosphorylated by protein phosphatase PPM1K.

It localises to the mitochondrion matrix. The catalysed reaction is N(6)-[(R)-lipoyl]-L-lysyl-[protein] + 3-methyl-2-oxobutanoate + H(+) = N(6)-[(R)-S(8)-2-methylpropanoyldihydrolipoyl]-L-lysyl-[protein] + CO2. Together with BCKDHB forms the heterotetrameric E1 subunit of the mitochondrial branched-chain alpha-ketoacid dehydrogenase (BCKD) complex. The BCKD complex catalyzes the multi-step oxidative decarboxylation of alpha-ketoacids derived from the branched-chain amino-acids valine, leucine and isoleucine producing CO2 and acyl-CoA which is subsequently utilized to produce energy. The E1 subunit catalyzes the first step with the decarboxylation of the alpha-ketoacid forming an enzyme-product intermediate. A reductive acylation mediated by the lipoylamide cofactor of E2 extracts the acyl group from the E1 active site for the next step of the reaction. This chain is 2-oxoisovalerate dehydrogenase subunit alpha, mitochondrial (BCKDHA), found in Macaca fascicularis (Crab-eating macaque).